A 306-amino-acid polypeptide reads, in one-letter code: Probable cobalamin biosynthesis protein CobD (306 aa).

5 consecutive transmembrane segments (helical) span residues 54–74, 88–108, 155–175, 207–227, and 286–306; these read LFGF…AFEI, ISLY…IEFS, ITDS…PGAF, ILNF…APFY, and SLKA…ILFM.

Belongs to the CobD/CbiB family.

It localises to the cell membrane. The protein operates within cofactor biosynthesis; adenosylcobalamin biosynthesis. Converts cobyric acid to cobinamide by the addition of aminopropanol on the F carboxylic group. The protein is Probable cobalamin biosynthesis protein CobD of Methanococcus maripaludis (strain DSM 14266 / JCM 13030 / NBRC 101832 / S2 / LL).